Consider the following 172-residue polypeptide: Myosin regulatory light chain 2, smooth muscle minor isoform (172 aa).

Ser-2 carries the N-acetylserine modification. Residue Thr-19 is modified to Phosphothreonine; by MLCK. Ser-20 is modified (phosphoserine; by MLCK). EF-hand domains are found at residues 29–64 (SQIQ…LGKN), 98–133 (DPED…MGDR), and 134–169 (FTDE…GAKD). The Ca(2+) site is built by Asp-42, Asn-44, Asp-46, and Asp-53.

As to quaternary structure, myosin is a hexamer of 2 heavy chains and 4 light chains. Post-translationally, phosphorylation increases the actin-activated myosin ATPase activity and thereby regulates the contractile activity.

Myosin regulatory subunit that plays an important role in regulation of both smooth muscle and nonmuscle cell contractile activity. Implicated in cytokinesis, receptor capping, and cell locomotion. The sequence is that of Myosin regulatory light chain 2, smooth muscle minor isoform from Gallus gallus (Chicken).